Reading from the N-terminus, the 225-residue chain is Holliday junction branch migration complex subunit RuvA (225 aa).

The interval 1–71 (MISWINGDLV…EDSDLLFGFT (71 aa)) is domain I. The tract at residues 72-150 (SKDQKNFFIE…SEILSEEEKS (79 aa)) is domain II. Positions 151–161 (KDEFEIKDPEI) are flexible linker. The domain III stretch occupies residues 161 to 225 (IIKMIEDLQL…LDEDSSNKDR (65 aa)).

Belongs to the RuvA family. As to quaternary structure, homotetramer. Forms an RuvA(8)-RuvB(12)-Holliday junction (HJ) complex. HJ DNA is sandwiched between 2 RuvA tetramers; dsDNA enters through RuvA and exits via RuvB. An RuvB hexamer assembles on each DNA strand where it exits the tetramer. Each RuvB hexamer is contacted by two RuvA subunits (via domain III) on 2 adjacent RuvB subunits; this complex drives branch migration. In the full resolvosome a probable DNA-RuvA(4)-RuvB(12)-RuvC(2) complex forms which resolves the HJ.

It localises to the cytoplasm. Functionally, the RuvA-RuvB-RuvC complex processes Holliday junction (HJ) DNA during genetic recombination and DNA repair, while the RuvA-RuvB complex plays an important role in the rescue of blocked DNA replication forks via replication fork reversal (RFR). RuvA specifically binds to HJ cruciform DNA, conferring on it an open structure. The RuvB hexamer acts as an ATP-dependent pump, pulling dsDNA into and through the RuvAB complex. HJ branch migration allows RuvC to scan DNA until it finds its consensus sequence, where it cleaves and resolves the cruciform DNA. This Prochlorococcus marinus (strain AS9601) protein is Holliday junction branch migration complex subunit RuvA.